Reading from the N-terminus, the 298-residue chain is Thymidylate synthase (298 aa).

Residues Arg-25 and 159-160 (RR) each bind dUMP. Cys-179 (nucleophile) is an active-site residue. DUMP-binding positions include 200-203 (RSCD), Asn-211, and 241-243 (HLY). A (6R)-5,10-methylene-5,6,7,8-tetrahydrofolate-binding site is contributed by Asp-203. Residue Ala-297 coordinates (6R)-5,10-methylene-5,6,7,8-tetrahydrofolate.

Belongs to the thymidylate synthase family. Bacterial-type ThyA subfamily. As to quaternary structure, homodimer.

Its subcellular location is the cytoplasm. It catalyses the reaction dUMP + (6R)-5,10-methylene-5,6,7,8-tetrahydrofolate = 7,8-dihydrofolate + dTMP. The protein operates within pyrimidine metabolism; dTTP biosynthesis. In terms of biological role, catalyzes the reductive methylation of 2'-deoxyuridine-5'-monophosphate (dUMP) to 2'-deoxythymidine-5'-monophosphate (dTMP) while utilizing 5,10-methylenetetrahydrofolate (mTHF) as the methyl donor and reductant in the reaction, yielding dihydrofolate (DHF) as a by-product. This enzymatic reaction provides an intracellular de novo source of dTMP, an essential precursor for DNA biosynthesis. In Rhodopseudomonas palustris (strain BisA53), this protein is Thymidylate synthase.